Consider the following 361-residue polypeptide: G-protein coupled receptor 68 (361 aa).

At Met-1–Asn-12 the chain is on the extracellular side. Asn-3 and Asn-8 each carry an N-linked (GlcNAc...) asparagine glycan. Residues Cys-13–Gln-49 traverse the membrane as a helical segment. 2 cysteine pairs are disulfide-bonded: Cys-13–Cys-258 and Cys-94–Cys-172. At Ile-50–Arg-53 the chain is on the cytoplasmic side. The helical transmembrane segment at Asn-54–His-84 threads the bilayer. Topologically, residues Asp-85–His-89 are extracellular. A helical membrane pass occupies residues Asp-90 to His-125. Residues Pro-126 to Arg-133 are Cytoplasmic-facing. The helical transmembrane segment at Thr-134–Glu-160 threads the bilayer. Residues Glu-161–Tyr-176 are Extracellular-facing. The tract at residues Glu-161 to Tyr-176 is extracellular loop 2 (ECL2). A helical membrane pass occupies residues Pro-177 to Arg-214. Residues Ser-215–Thr-218 lie on the Cytoplasmic side of the membrane. Residues Gln-219–Trp-254 form a helical membrane-spanning segment. The Extracellular portion of the chain corresponds to Glu-255–Phe-260. A helical transmembrane segment spans residues Ala-261–Val-289. Residues Ser-290 to Ser-361 lie on the Cytoplasmic side of the membrane. A disordered region spans residues Leu-340–Ser-361. The segment covering Gly-351 to Ser-361 has biased composition (gly residues).

It belongs to the G-protein coupled receptor 1 family.

It localises to the cell membrane. Activated by a network of residues that connects an extracellular-facing cavity to Glu-149, a conserved charged residue buried in the transmembrane core of the receptor. Protonation likely drives conformational changes in extracellular loop 2 (ECL2), which stabilizes movement of transmembrane 3 (TM3) and a series of rearrangements that connect the extracellular-facing cavity to Glu-149, a residue only conserved in proton-sensing G-protein coupled receptors. Activated in an allosteric manner by divalent metal ions at the extracellular surface following the order: Cd(2+) &gt; Co(2+) &gt; Ni(2+) &gt; Zn(2+) &gt; Fe(2+) &gt; Ca(2+) &gt; Mg(2+). Functionally, proton-sensing G-protein coupled receptor activated by extracellular pH, which is required to monitor pH changes and generate adaptive reactions. The receptor is almost silent at pH 7.8 but fully activated at pH 6.8. Ligand binding causes a conformation change that triggers signaling via guanine nucleotide-binding proteins (G proteins) and modulates the activity of downstream effectors, such as phospholipase C. GPR68 is mainly coupled to G(q) G proteins and mediates production of diacylglycerol (DAG) and inositol 1,4,5-trisphosphate (IP3). Acts as a key mechanosensor of fluid shear stress and membrane stretch. Expressed in endothelial cells of small-diameter resistance arteries, where it mediates flow-induced dilation in response to shear stress. May represents an osteoblastic pH sensor regulating cell-mediated responses to acidosis in bone. Acts as a regulator of calcium-sensing receptor CASR in a seesaw manner: GPR68-mediated signaling inhibits CASR signaling in response to protons, while CASR inhibits GPR68 in presence of extracellular calcium. The chain is G-protein coupled receptor 68 (GPR68) from Bos taurus (Bovine).